Here is a 254-residue protein sequence, read N- to C-terminus: PHD finger protein ALFIN-LIKE 8 (254 aa).

Residues 137–194 (GTAKKQSKEKTPKTSGKSNKSGTKPSRQPEPNSRGPKMPPPKDEDDSGGEEEEEEEDH) are disordered. Positions 149 to 162 (KTSGKSNKSGTKPS) are enriched in low complexity. The segment covering 179–194 (DEDDSGGEEEEEEEDH) has biased composition (acidic residues). The PHD-type zinc-finger motif lies at 196 to 248 (NTLCGACGDNYGQDEFWICCDACETWFHGKCVKITPAKAEHIKHYKCPNCSSS).

The protein belongs to the Alfin family. Interacts with H3K4me3 and to a lesser extent with H3K4me2.

It is found in the nucleus. In terms of biological role, histone-binding component that specifically recognizes H3 tails trimethylated on 'Lys-4' (H3K4me3), which mark transcription start sites of virtually all active genes. The chain is PHD finger protein ALFIN-LIKE 8 from Oryza sativa subsp. japonica (Rice).